A 199-amino-acid polypeptide reads, in one-letter code: Thymidine kinase (199 aa).

ATP-binding positions include 23–30 (GSMFSGKT) and 95–98 (DEAQ). The active-site Proton acceptor is the Glu96. Positions 152, 155, 184, and 187 each coordinate Zn(2+).

It belongs to the thymidine kinase family. In terms of assembly, homotetramer.

It localises to the cytoplasm. The enzyme catalyses thymidine + ATP = dTMP + ADP + H(+). In Bacteroides fragilis (strain ATCC 25285 / DSM 2151 / CCUG 4856 / JCM 11019 / LMG 10263 / NCTC 9343 / Onslow / VPI 2553 / EN-2), this protein is Thymidine kinase.